Here is a 67-residue protein sequence, read N- to C-terminus: Sporulation protein 24 (67 aa).

A phosphoserine mark is found at Ser-24 and Ser-32.

Phosphorylated during meiosis. During meiosis, exists in both unphosphorylated and phosphorylated forms with the highest degree of phosphorylation occurring in mid-meiosis.

Its subcellular location is the prospore membrane. In terms of biological role, required for efficient sporulation. This chain is Sporulation protein 24, found in Saccharomyces cerevisiae (strain ATCC 204508 / S288c) (Baker's yeast).